The sequence spans 460 residues: Probable elastin-binding protein EbpS (460 aa).

The span at 1–40 shows a compositional bias: basic and acidic residues; sequence MSNNNFKDDFEKNRQSINPDEHQTELKEDDKTNENKKEAD. A disordered region spans residues 1–277; it reads MSNNNFKDDF…NQYNDQSEGK (277 aa). The span at 41–57 shows a compositional bias: low complexity; that stretch reads SQNSLSNNSNQQFPPRN. The span at 74–128 shows a compositional bias: basic and acidic residues; it reads QQDDKHQKNSDAKTTEGSLDDRYDEAQLQQQHDKSQQQNKTEKQSQDNRMKDGKD. Positions 177-192 are enriched in low complexity; it reads ATGAGIAGAAGVAGAA. Positions 203-226 are enriched in basic and acidic residues; that stretch reads DKQDSKHSNHENDEKSVKNDDQKQ. A compositionally biased stretch (low complexity) spans 264-273; sequence SNQNNQYNDQ. Residues 285–305 form a helical membrane-spanning segment; that stretch reads ILLPLIAAILILGAIAIFGGM. Over residues 313-359 the composition is skewed to basic and acidic residues; sequence SKSDDQKIANQSKKDSDKKDGAQSEDNKDKKSDSNKDKKSDSDKNAD. The tract at residues 313 to 411 is disordered; that stretch reads SKSDDQKIAN…NQQATQGQQS (99 aa). The segment covering 364 to 411 has biased composition (low complexity); that stretch reads NSSSNPNATSTNNNDNVANNNSNYTNQNQQDNANQNSNNQQATQGQQS. The region spanning 410–458 is the LysM domain; the sequence is QSHTVYGQENLYRIAIQYYGEGTQANVDKIKRANGLSSNNIHNGQTLVI.

The protein localises to the cell membrane. This Staphylococcus epidermidis (strain ATCC 35984 / DSM 28319 / BCRC 17069 / CCUG 31568 / BM 3577 / RP62A) protein is Probable elastin-binding protein EbpS (ebpS).